Reading from the N-terminus, the 111-residue chain is Phosphoribosyl-ATP pyrophosphatase (111 aa).

This sequence belongs to the PRA-PH family.

It localises to the cytoplasm. It carries out the reaction 1-(5-phospho-beta-D-ribosyl)-ATP + H2O = 1-(5-phospho-beta-D-ribosyl)-5'-AMP + diphosphate + H(+). The protein operates within amino-acid biosynthesis; L-histidine biosynthesis; L-histidine from 5-phospho-alpha-D-ribose 1-diphosphate: step 2/9. The polypeptide is Phosphoribosyl-ATP pyrophosphatase (hisE) (Pseudomonas aeruginosa (strain ATCC 15692 / DSM 22644 / CIP 104116 / JCM 14847 / LMG 12228 / 1C / PRS 101 / PAO1)).